The primary structure comprises 366 residues: ABI gene family member 3 (366 aa).

A coiled-coil region spans residues cysteine 33–valine 61. Residues serine 161–proline 195 are disordered. Residues serine 213 and serine 216 each carry the phosphoserine modification. Positions glycine 215–proline 302 are disordered. Positions proline 232–alanine 248 are enriched in pro residues. Positions serine 308–cysteine 366 constitute an SH3 domain. Phosphoserine is present on serine 342.

Belongs to the ABI family. In terms of assembly, may interact with PAK1 and PAK2. Probably interacts with TARSH. As to expression, expressed in heart, lung, liver, pancreas, kidney, placenta and at low levels in brain and skeletal muscle.

It is found in the cytoplasm. Its function is as follows. May inhibit tumor metastasis. In vitro, reduces cell motility. The chain is ABI gene family member 3 (ABI3) from Homo sapiens (Human).